The primary structure comprises 419 residues: Enolase (419 aa).

Q161 is a binding site for (2R)-2-phosphoglycerate. E205 serves as the catalytic Proton donor. The Mg(2+) site is built by D240, E283, and D309. 4 residues coordinate (2R)-2-phosphoglycerate: K334, R363, S364, and K385. K334 serves as the catalytic Proton acceptor.

The protein belongs to the enolase family. Mg(2+) is required as a cofactor.

Its subcellular location is the cytoplasm. The protein resides in the secreted. It localises to the cell surface. It catalyses the reaction (2R)-2-phosphoglycerate = phosphoenolpyruvate + H2O. It functions in the pathway carbohydrate degradation; glycolysis; pyruvate from D-glyceraldehyde 3-phosphate: step 4/5. Its function is as follows. Catalyzes the reversible conversion of 2-phosphoglycerate (2-PG) into phosphoenolpyruvate (PEP). It is essential for the degradation of carbohydrates via glycolysis. The polypeptide is Enolase (Saccharolobus islandicus (strain Y.N.15.51 / Yellowstone #2) (Sulfolobus islandicus)).